A 133-amino-acid chain; its full sequence is Small ribosomal subunit protein uS8 (133 aa).

This sequence belongs to the universal ribosomal protein uS8 family. In terms of assembly, part of the 30S ribosomal subunit. Contacts proteins S5 and S12.

Its function is as follows. One of the primary rRNA binding proteins, it binds directly to 16S rRNA central domain where it helps coordinate assembly of the platform of the 30S subunit. The chain is Small ribosomal subunit protein uS8 from Mycoplasmoides gallisepticum (strain R(low / passage 15 / clone 2)) (Mycoplasma gallisepticum).